We begin with the raw amino-acid sequence, 391 residues long: FLUCTUATING-LIGHT-ACCLIMATION protein 1, chloroplastic (391 aa).

A chloroplast-targeting transit peptide spans 1-48 (MASSSTFLELTPFQWNQPLPYTQRPHHRTVLLYSKPQRRSNSIRLQIS). Residues 87-107 (AIAAVLLGLLLFYDPNSALAA) traverse the membrane as a helical segment. Over residues 116–138 (SFSSRSRSSSSSSSQSYSVPRTS) the composition is skewed to low complexity. The tract at residues 116–140 (SFSSRSRSSSSSSSQSYSVPRTSNP) is disordered. A run of 2 helical transmembrane segments spans residues 168–188 (FGFG…AFVL) and 321–341 (YIVV…PING).

The protein belongs to the FLAP family.

It localises to the plastid. Its subcellular location is the chloroplast thylakoid membrane. The protein localises to the chloroplast membrane. It is found in the chloroplast envelope. Functionally, monitors proton H(+) homeostasis in chloroplasts to manipulate luminal acidification levels appropriately to balance photoprotection and photochemical processes. Required during acclimation response to fluctuating light (e.g. photosynthetic activity optimization) by controlling non-photochemical quenching (NPQ); acts independently from DLDG1. This Arabidopsis thaliana (Mouse-ear cress) protein is FLUCTUATING-LIGHT-ACCLIMATION protein 1, chloroplastic.